The primary structure comprises 167 residues: Large ribosomal subunit protein uL10 (167 aa).

Belongs to the universal ribosomal protein uL10 family. As to quaternary structure, part of the ribosomal stalk of the 50S ribosomal subunit. The N-terminus interacts with L11 and the large rRNA to form the base of the stalk. The C-terminus forms an elongated spine to which L12 dimers bind in a sequential fashion forming a multimeric L10(L12)X complex.

Its function is as follows. Forms part of the ribosomal stalk, playing a central role in the interaction of the ribosome with GTP-bound translation factors. The polypeptide is Large ribosomal subunit protein uL10 (Flavobacterium johnsoniae (strain ATCC 17061 / DSM 2064 / JCM 8514 / BCRC 14874 / CCUG 350202 / NBRC 14942 / NCIMB 11054 / UW101) (Cytophaga johnsonae)).